Consider the following 251-residue polypeptide: 1-(5-phosphoribosyl)-5-[(5-phosphoribosylamino)methylideneamino] imidazole-4-carboxamide isomerase (251 aa).

Asp8 (proton acceptor) is an active-site residue. Asp131 serves as the catalytic Proton donor.

This sequence belongs to the HisA/HisF family.

The protein resides in the cytoplasm. The catalysed reaction is 1-(5-phospho-beta-D-ribosyl)-5-[(5-phospho-beta-D-ribosylamino)methylideneamino]imidazole-4-carboxamide = 5-[(5-phospho-1-deoxy-D-ribulos-1-ylimino)methylamino]-1-(5-phospho-beta-D-ribosyl)imidazole-4-carboxamide. It participates in amino-acid biosynthesis; L-histidine biosynthesis; L-histidine from 5-phospho-alpha-D-ribose 1-diphosphate: step 4/9. The sequence is that of 1-(5-phosphoribosyl)-5-[(5-phosphoribosylamino)methylideneamino] imidazole-4-carboxamide isomerase from Burkholderia lata (strain ATCC 17760 / DSM 23089 / LMG 22485 / NCIMB 9086 / R18194 / 383).